The chain runs to 431 residues: Enolase (431 aa).

Glutamine 167 contacts (2R)-2-phosphoglycerate. Glutamate 209 (proton donor) is an active-site residue. Positions 246, 290, and 317 each coordinate Mg(2+). (2R)-2-phosphoglycerate is bound by residues lysine 342, arginine 371, serine 372, and lysine 393. The active-site Proton acceptor is the lysine 342.

The protein belongs to the enolase family. In terms of assembly, component of the RNA degradosome, a multiprotein complex involved in RNA processing and mRNA degradation. Requires Mg(2+) as cofactor.

The protein resides in the cytoplasm. The protein localises to the secreted. It localises to the cell surface. It catalyses the reaction (2R)-2-phosphoglycerate = phosphoenolpyruvate + H2O. It participates in carbohydrate degradation; glycolysis; pyruvate from D-glyceraldehyde 3-phosphate: step 4/5. Its function is as follows. Catalyzes the reversible conversion of 2-phosphoglycerate (2-PG) into phosphoenolpyruvate (PEP). It is essential for the degradation of carbohydrates via glycolysis. The chain is Enolase from Yersinia enterocolitica serotype O:8 / biotype 1B (strain NCTC 13174 / 8081).